Here is a 731-residue protein sequence, read N- to C-terminus: RNA-binding protein RMD9-like, mitochondrial (731 aa).

Residues 1-10 (MIRLAQQTQV) are compositionally biased toward polar residues. 3 disordered regions span residues 1–29 (MIRL…NSLT), 77–133 (GGNI…GNSI), and 590–630 (QNDR…FNNP). The segment covering 83-100 (NNNNHLAQNNSNNSNNHH) has biased composition (low complexity). Basic residues predominate over residues 101-122 (NNNRNHHHNNNRNHHQNNHNHS). Ser-132 carries the post-translational modification Phosphoserine. Residues 598-617 (SNMNSTQISRTATPSPSLTP) are compositionally biased toward polar residues.

Belongs to the RMD9 family. In terms of assembly, monomer. In terms of processing, phosphorylated. Phosphorylation promotes binding to RNA.

It is found in the mitochondrion inner membrane. Functionally, may be involved in the processing or stability of mitochondrial mRNAs. This chain is RNA-binding protein RMD9-like, mitochondrial, found in Saccharomyces cerevisiae (strain ATCC 204508 / S288c) (Baker's yeast).